A 505-amino-acid chain; its full sequence is Cytochrome P450 52C1 (505 aa).

Residues 4–21 (LFCFLAGIIVVYKAAQYY) form a helical membrane-spanning segment. Cysteine 453 is a heme binding site.

It belongs to the cytochrome P450 family. Heme serves as cofactor.

It is found in the membrane. Functionally, together with an NADPH cytochrome P450 the enzyme system catalyzes the terminal hydroxylation as the first step in the assimilation of alkanes and fatty acids. This Candida tropicalis (Yeast) protein is Cytochrome P450 52C1 (CYP52C1).